Consider the following 348-residue polypeptide: Benzoate 1,2-dioxygenase electron transfer component (348 aa).

One can recognise a 2Fe-2S ferredoxin-type domain in the interval 14–109 (HQVALQFEDG…DAVFQIQASS (96 aa)). [2Fe-2S] cluster contacts are provided by Cys51, Cys56, Cys59, and Cys93. A ferredoxin-reductase region spans residues 111-348 (VCKTKIHHFE…NFLFEKFSAN (238 aa)). One can recognise an FAD-binding FR-type domain in the interval 116–217 (IHHFEGTLAR…TGPFGSFYLR (102 aa)).

It belongs to the bacterial ring-hydroxylating dioxygenase ferredoxin reductase family. In terms of assembly, this dioxygenase system consists of three proteins: the two subunits of the hydroxylase component (BenA and BenB), and an electron transfer component (BenC). FAD is required as a cofactor. It depends on [2Fe-2S] cluster as a cofactor.

It carries out the reaction 2 reduced [2Fe-2S]-[ferredoxin] + NAD(+) + H(+) = 2 oxidized [2Fe-2S]-[ferredoxin] + NADH. Its pathway is xenobiotic degradation; toluene degradation. In terms of biological role, electron transfer component of benzoate 1,2-dioxygenase system. This Acinetobacter baylyi (strain ATCC 33305 / BD413 / ADP1) protein is Benzoate 1,2-dioxygenase electron transfer component (benC).